The primary structure comprises 108 residues: MTLGQQAESLAQGYLEQQGLTFVARNVRYPFGEIDLVMRHKHHWVFVEVKYRSANQFGGAIQALSKAQIGRIRMAASHYLQTHKLDVPCRFDVVAIEDAQIHWLVDAF.

Belongs to the UPF0102 family.

In Shewanella sp. (strain ANA-3), this protein is UPF0102 protein Shewana3_3881.